A 977-amino-acid chain; its full sequence is Pro-apoptotic serine protease NMA111 (977 aa).

The tract at residues 1 to 36 (MTIQAHKRTLSEVSTSSVGQLKRREGYTEDYTDEGS) is disordered. The serine protease stretch occupies residues 64–254 (VVSVHFAQVA…LPLDRILRAL (191 aa)). Residues His102, Asp133, and Ser216 each act as charge relay system in the active site. PDZ domains are found at residues 271 to 356 (QWLL…LVVQ) and 749 to 835 (SVLQ…VRKG).

Belongs to the peptidase S1C family.

The protein localises to the nucleus. Its function is as follows. Nuclear serine protease which mediates apoptosis. The chain is Pro-apoptotic serine protease NMA111 (NMA111) from Eremothecium gossypii (strain ATCC 10895 / CBS 109.51 / FGSC 9923 / NRRL Y-1056) (Yeast).